The primary structure comprises 556 residues: 2-isopropylmalate synthase (556 aa).

The Pyruvate carboxyltransferase domain occupies 33-307 (PIWLSSDLRD…DPQLDFSDID (275 aa)). Mg(2+) is bound by residues D42, H246, H248, and N282. Positions 439 to 556 (ATAPYTLKGH…ALHQAQEAAA (118 aa)) are regulatory domain.

This sequence belongs to the alpha-IPM synthase/homocitrate synthase family. LeuA type 2 subfamily. As to quaternary structure, homodimer. Mg(2+) is required as a cofactor.

Its subcellular location is the cytoplasm. It carries out the reaction 3-methyl-2-oxobutanoate + acetyl-CoA + H2O = (2S)-2-isopropylmalate + CoA + H(+). Its pathway is amino-acid biosynthesis; L-leucine biosynthesis; L-leucine from 3-methyl-2-oxobutanoate: step 1/4. In terms of biological role, catalyzes the condensation of the acetyl group of acetyl-CoA with 3-methyl-2-oxobutanoate (2-ketoisovalerate) to form 3-carboxy-3-hydroxy-4-methylpentanoate (2-isopropylmalate). This chain is 2-isopropylmalate synthase, found in Stutzerimonas stutzeri (strain A1501) (Pseudomonas stutzeri).